We begin with the raw amino-acid sequence, 92 residues long: Small ribosomal subunit protein uS19c (92 aa).

The protein belongs to the universal ribosomal protein uS19 family.

The protein resides in the plastid. It is found in the chloroplast. Protein S19 forms a complex with S13 that binds strongly to the 16S ribosomal RNA. This is Small ribosomal subunit protein uS19c from Cycas taitungensis (Prince sago).